Reading from the N-terminus, the 484-residue chain is E-selectin (484 aa).

An N-terminal signal peptide occupies residues 1–22 (MIASQFLSALPLVLLLLRESGA). The C-type lectin domain maps to 23 to 140 (WSYSASTETM…CSKKKLALCY (118 aa)). Topologically, residues 23–429 (WSYSASTETM…CEAPAESKIP (407 aa)) are extracellular. 14 cysteine pairs are disulfide-bonded: C41/C139, C112/C131, C144/C155, C149/C164, C166/C175, C181/C222, C194/C204, C208/C235, C240/C285, C271/C298, C303/C348, C334/C361, C366/C407, and C393/C420. N-linked (GlcNAc...) asparagine glycans are attached at residues N61, N65, and N79. The Ca(2+) site is built by E102, N104, and E110. A carbohydrate contacts are provided by residues 102-110 (EPNNKQSNE), 114-119 (EIYIKR), and 127-129 (NDE). 2 residues coordinate Ca(2+): N127 and D128. Positions 141 to 176 (TAACTPTSCSGHGECIETINSSTCQCYPGFRGLQCE) constitute an EGF-like domain. The N-linked (GlcNAc...) asparagine glycan is linked to N160. 4 consecutive Sushi domains span residues 179–237 (VECD…TCKA), 251–300 (VSCN…VCKA), 301–363 (VKCP…SCQV), and 364–422 (VQCS…TCEA). An N-linked (GlcNAc...) asparagine glycan is attached at N201. Residue N254 is glycosylated (N-linked (GlcNAc...) asparagine). N376 and N400 each carry an N-linked (GlcNAc...) asparagine glycan. The chain crosses the membrane as a helical span at residues 430 to 451 (LAMGLAAGGVSFMTSASFLLWL). The Cytoplasmic segment spans residues 452–484 (LKRLRKRAKKFVPSSSSECLQPNGSYQMPSDLI).

It belongs to the selectin/LECAM family. Interacts with SELPLG/PSGL1 and PODXL2 through the sialyl Lewis X epitope. SELPLG sulfation appears not to be required for this interaction.

The protein resides in the cell membrane. Functionally, cell-surface glycoprotein having a role in immunoadhesion. Mediates in the adhesion of blood neutrophils in cytokine-activated endothelium through interaction with SELPLG/PSGL1. May have a role in capillary morphogenesis. The sequence is that of E-selectin (SELE) from Sus scrofa (Pig).